We begin with the raw amino-acid sequence, 260 residues long: Ubiquinone/menaquinone biosynthesis C-methyltransferase UbiE (260 aa).

Residues Thr83, Asp104, and 132–133 (NA) each bind S-adenosyl-L-methionine.

Belongs to the class I-like SAM-binding methyltransferase superfamily. MenG/UbiE family.

It catalyses the reaction a 2-demethylmenaquinol + S-adenosyl-L-methionine = a menaquinol + S-adenosyl-L-homocysteine + H(+). The catalysed reaction is a 2-methoxy-6-(all-trans-polyprenyl)benzene-1,4-diol + S-adenosyl-L-methionine = a 5-methoxy-2-methyl-3-(all-trans-polyprenyl)benzene-1,4-diol + S-adenosyl-L-homocysteine + H(+). It participates in quinol/quinone metabolism; menaquinone biosynthesis; menaquinol from 1,4-dihydroxy-2-naphthoate: step 2/2. It functions in the pathway cofactor biosynthesis; ubiquinone biosynthesis. Functionally, methyltransferase required for the conversion of demethylmenaquinol (DMKH2) to menaquinol (MKH2) and the conversion of 2-polyprenyl-6-methoxy-1,4-benzoquinol (DDMQH2) to 2-polyprenyl-3-methyl-6-methoxy-1,4-benzoquinol (DMQH2). This is Ubiquinone/menaquinone biosynthesis C-methyltransferase UbiE from Bartonella henselae (strain ATCC 49882 / DSM 28221 / CCUG 30454 / Houston 1) (Rochalimaea henselae).